A 319-amino-acid chain; its full sequence is Carbonic anhydrase 6 (319 aa).

The first 14 residues, 1-14, serve as a signal peptide directing secretion; that stretch reads MITLLFLLVVGAQA. Positions 16–273 constitute an Alpha-carbonic anhydrase domain; that stretch reads HEWTYSEGVL…LNHRVVEANF (258 aa). The cysteines at positions 37 and 219 are disulfide-linked. N62 carries N-linked (GlcNAc...) asparagine glycosylation. The Proton donor/acceptor role is filled by H80. The Zn(2+) site is built by H106, H108, and H133. Residue 215–216 coordinates substrate; that stretch reads TT. Residue N251 is glycosylated (N-linked (GlcNAc...) asparagine).

The protein belongs to the alpha-carbonic anhydrase family. Zn(2+) serves as cofactor. As to expression, major constituent of saliva.

The protein resides in the secreted. The enzyme catalyses hydrogencarbonate + H(+) = CO2 + H2O. In terms of biological role, reversible hydration of carbon dioxide. Its role in saliva is unknown. This Bos taurus (Bovine) protein is Carbonic anhydrase 6 (CA6).